Reading from the N-terminus, the 231-residue chain is Ion-translocating oxidoreductase complex subunit E (231 aa).

The next 6 helical transmembrane spans lie at 18–38, 39–59, 63–83, 86–106, 125–145, and 182–202; these read ALVQ…ATNA, LGLG…ISTL, TPAE…VSAV, LINA…PLIV, ALSA…MFVL, and PFLL…MLAG.

The protein belongs to the NqrDE/RnfAE family. In terms of assembly, the complex is composed of six subunits: RsxA, RsxB, RsxC, RsxD, RsxE and RsxG.

It is found in the cell inner membrane. Functionally, part of a membrane-bound complex that couples electron transfer with translocation of ions across the membrane. Required to maintain the reduced state of SoxR. The sequence is that of Ion-translocating oxidoreductase complex subunit E from Escherichia coli (strain ATCC 8739 / DSM 1576 / NBRC 3972 / NCIMB 8545 / WDCM 00012 / Crooks).